The following is a 358-amino-acid chain: MVNSLTTPEPQTLKPGVKAPVQETLLTPRFYTTDFDAVANLDISANETEIRAIVEELRADYNRHHFVRDEEFKQSWDHITGEKRRAFIDFLERSCTSEFSGFLLFKELSRRIKSRNPLLAEAFEFMARDEARHAGFLNKSMSDLNLSLDLNYLTKNRTYTFFPPEWVIYTVYLSEKIGYWRYILVHQHMQEHPEYQFYPLFRKFESWCQDENRHGDFFKALLRSQPQLWKNWKARLWVRFFLLTVFVTHTMTVFERASFYESIGIHPRKYNNRVIQETNNTSARAFPLILNTNHPLFFWRLEQCWENNFKLAAIKNSKLPNFVKFFQRIPPATAIFWNMLRLFLIKPIDTEATRGTVL.

The protein belongs to the AcsF family. Fe cation is required as a cofactor.

The enzyme catalyses Mg-protoporphyrin IX 13-monomethyl ester + 3 NADPH + 3 O2 + 2 H(+) = 3,8-divinyl protochlorophyllide a + 3 NADP(+) + 5 H2O. It participates in porphyrin-containing compound metabolism; chlorophyll biosynthesis (light-independent). Catalyzes the formation of the isocyclic ring in chlorophyll biosynthesis. Mediates the cyclase reaction, which results in the formation of divinylprotochlorophyllide (Pchlide) characteristic of all chlorophylls from magnesium-protoporphyrin IX 13-monomethyl ester (MgPMME). This chain is Magnesium-protoporphyrin IX monomethyl ester [oxidative] cyclase 2, found in Nostoc sp. (strain PCC 7120 / SAG 25.82 / UTEX 2576).